A 290-amino-acid chain; its full sequence is 33 kDa chaperonin (290 aa).

2 disulfide bridges follow: Cys-235-Cys-237 and Cys-268-Cys-271.

The protein belongs to the HSP33 family. Under oxidizing conditions two disulfide bonds are formed involving the reactive cysteines. Under reducing conditions zinc is bound to the reactive cysteines and the protein is inactive.

It localises to the cytoplasm. Functionally, redox regulated molecular chaperone. Protects both thermally unfolding and oxidatively damaged proteins from irreversible aggregation. Plays an important role in the bacterial defense system toward oxidative stress. In Streptococcus pyogenes serotype M18 (strain MGAS8232), this protein is 33 kDa chaperonin.